The sequence spans 1043 residues: Beta-klotho (1043 aa).

Residues 1–994 are Extracellular-facing; sequence MKTGCAAGSP…ICSFLVEKKP (994 aa). 2 glycosyl hydrolase-1 regions span residues 77-506 and 515-965; these read LYDT…DNGF and MKGR…SSGL. Residues Asn84, Asn122, Asn161, Asn211, Asn262, Asn308, Asn389, Asn552, Asn609, Asn700, Asn704, and Asn837 are each glycosylated (N-linked (GlcNAc...) asparagine). Residues 995–1015 form a helical membrane-spanning segment; that stretch reads LIFFGCCFISTLAVLLSITVF. The Cytoplasmic segment spans residues 1016 to 1043; the sequence is HHQKRRKFQKARNLQNIPLKKGHSRVFS.

Belongs to the glycosyl hydrolase 1 family. Klotho subfamily. As to quaternary structure, interacts with FGF19; this interaction is direct. Interacts (via C-terminus) with FGF21; this interaction is direct. Interacts with FGFR1 and FGFR4. As to expression, present in liver, muscle and white adipose tissue, but not in kidney (at protein level). Expressed in liver and pancreas, and at lower levels in skin, stomach, skeletal muscle, small intestine and lung.

The protein resides in the cell membrane. Contributes to the transcriptional repression of cholesterol 7-alpha-hydroxylase (CYP7A1), the rate-limiting enzyme in bile acid synthesis. Probably inactive as a glycosidase. Increases the ability of FGFR1 and FGFR4 to bind FGF21. The protein is Beta-klotho (Klb) of Mus musculus (Mouse).